Here is a 358-residue protein sequence, read N- to C-terminus: Peptide chain release factor 1 (358 aa).

Gln233 carries the N5-methylglutamine modification.

It belongs to the prokaryotic/mitochondrial release factor family. In terms of processing, methylated by PrmC. Methylation increases the termination efficiency of RF1.

It is found in the cytoplasm. In terms of biological role, peptide chain release factor 1 directs the termination of translation in response to the peptide chain termination codons UAG and UAA. This chain is Peptide chain release factor 1, found in Blochmanniella floridana.